The following is a 227-amino-acid chain: MTKRSKAYRSAVTSIASDKLYPVEDAIGLVKETAYAKIDSAFEVALKLGIDPRKTDQLVRGVVMLPHGTGKAVRVVVFATGPSAQAALDSGASEVGGSDLVARVADGYVDFDVAISTPELMAQVGQLGRVLGPRGLMPNPKTGTVTADVGKAVKDALGGRIEFKTDKHANIHFVIGKTSFSVESLSENLSVALDEINRARPQKHKGRYIKKMFFSSTFGPSVRVALA.

The protein belongs to the universal ribosomal protein uL1 family. Part of the 50S ribosomal subunit.

In terms of biological role, binds directly to 23S rRNA. The L1 stalk is quite mobile in the ribosome, and is involved in E site tRNA release. Protein L1 is also a translational repressor protein, it controls the translation of the L11 operon by binding to its mRNA. This Tropheryma whipplei (strain TW08/27) (Whipple's bacillus) protein is Large ribosomal subunit protein uL1.